The following is a 317-amino-acid chain: tRNA dimethylallyltransferase (317 aa).

ATP is bound at residue 14–21; the sequence is GPTAVGKT. Position 16–21 (16–21) interacts with substrate; sequence TAVGKT. The tract at residues 39–42 is interaction with substrate tRNA; it reads DSMQ.

It belongs to the IPP transferase family. As to quaternary structure, monomer. Mg(2+) serves as cofactor.

The enzyme catalyses adenosine(37) in tRNA + dimethylallyl diphosphate = N(6)-dimethylallyladenosine(37) in tRNA + diphosphate. In terms of biological role, catalyzes the transfer of a dimethylallyl group onto the adenine at position 37 in tRNAs that read codons beginning with uridine, leading to the formation of N6-(dimethylallyl)adenosine (i(6)A). This chain is tRNA dimethylallyltransferase, found in Bacillus cereus (strain ATCC 10987 / NRS 248).